Here is a 356-residue protein sequence, read N- to C-terminus: uncharacterized protein (356 aa).

The next 6 helical transmembrane spans lie at 7 to 29, 49 to 71, 91 to 113, 270 to 292, 299 to 316, and 329 to 348; these read LLSRFLGIFLNVSFVSVLLVSLY, YFLNILPLGFYYISFITLSISLI, ISPLRFSLPVLLFSVFLSSTFLL, LFYRVMFSLSPVFISIFSLYLFF, QVIPRFLVFIVILWLVIL, and VLYSLIPIFLLILYSLKGVY.

It is found in the cell membrane. This is an uncharacterized protein from Aquifex aeolicus (strain VF5).